The chain runs to 128 residues: MRSAFYIFLVVAVLARCSVVAAFTNADDSQLLSKVSPDFAANDMTYTVSRKRLLRVAGREDDDATTDEEDRGFTSIVDVIKRSDAAEALHKLSKASAKKVKKAGKAVKELTAKEKEALKALLALKDGN.

Positions 1-22 are cleaved as a signal peptide; sequence MRSAFYIFLVVAVLARCSVVAA. Residues 52–71 carry the RxLR-dEER motif; that stretch reads RLLRVAGREDDDATTDEEDR.

It belongs to the RxLR effector family.

Its subcellular location is the secreted. It localises to the host nucleus. Functionally, effector that suppresses flg22-induced post-translational MAP kinase activation both tomato and Arabidopsis. The perception of highly conserved pathogen- or microbe-associated molecular patterns (PAMPs/MAMPs), such as flg22, triggers converging signaling pathways recruiting MAP kinase cascades and inducing transcriptional re-programming, yielding a generic antimicrobial response. The sequence is that of RxLR effector protein SFI2 from Phytophthora infestans (strain T30-4) (Potato late blight agent).